The sequence spans 303 residues: UPF0282 protein MM_2966 (303 aa).

This sequence belongs to the UPF0282 family.

This Methanosarcina mazei (strain ATCC BAA-159 / DSM 3647 / Goe1 / Go1 / JCM 11833 / OCM 88) (Methanosarcina frisia) protein is UPF0282 protein MM_2966.